The sequence spans 509 residues: Dihydrolipoyl dehydrogenase, mitochondrial (509 aa).

The transit peptide at 1–35 (MQSWSRVYCSLAKRGHFSRISHGLQAVSAVPLRTY) directs the protein to the mitochondrion. N6-acetyllysine; alternate is present on Lys66. Lys66 bears the N6-succinyllysine; alternate mark. Residues 71–80 (EKNETLGGTC) and Lys89 contribute to the FAD site. A disulfide bridge links Cys80 with Cys85. N6-acetyllysine; alternate occurs at positions 104, 122, 132, and 143. N6-succinyllysine; alternate is present on residues Lys104, Lys122, Lys132, and Lys143. Gly154 lines the FAD pocket. N6-succinyllysine is present on residues Lys159 and Lys166. 183–185 (TGS) contacts FAD. NAD(+) contacts are provided by residues 220–227 (GAGVIGVE) and Glu243. Residues Lys273 and Lys277 each carry the N6-succinyllysine modification. Residue Val278 participates in NAD(+) binding. Phosphoserine occurs at positions 285 and 297. Gly314 provides a ligand contact to NAD(+). Position 346 is an N6-acetyllysine (Lys346). FAD-binding positions include Asp355 and 361-364 (MLAH). An N6-acetyllysine; alternate modification is found at Lys410. Lys410 carries the N6-succinyllysine; alternate modification. An N6-acetyllysine mark is found at Lys417 and Lys420. Lys430 bears the N6-succinyllysine mark. The active-site Proton acceptor is His487. Ser502 bears the Phosphoserine mark. Lys505 carries the N6-acetyllysine; alternate modification. Lys505 carries the N6-succinyllysine; alternate modification.

The protein belongs to the class-I pyridine nucleotide-disulfide oxidoreductase family. As to quaternary structure, homodimer. Part of the multimeric pyruvate dehydrogenase complex that contains multiple copies of pyruvate dehydrogenase (subunits PDHA (PDHA1 or PDHA2) and PDHB, E1), dihydrolipoamide acetyltransferase (DLAT, E2) and lipoamide dehydrogenase (DLD, E3). These subunits are bound to an inner core composed of about 48 DLAT and 12 PDHX molecules (by non covalent bonds). The 2-oxoglutarate dehydrogenase complex is composed of OGDH (2-oxoglutarate dehydrogenase; E1), DLST (dihydrolipoamide succinyltransferase; E2), DLD (dihydrolipoamide dehydrogenase; E3) and the assembly factor KGD4. It contains multiple copies of the three enzymatic components (E1, E2 and E3). In the nucleus, the 2-oxoglutarate dehydrogenase complex associates with KAT2A. Interacts with PDHX. It depends on FAD as a cofactor. Post-translationally, tyrosine phosphorylated.

The protein localises to the mitochondrion matrix. It localises to the nucleus. It is found in the cell projection. Its subcellular location is the cilium. The protein resides in the flagellum. The protein localises to the cytoplasmic vesicle. It localises to the secretory vesicle. It is found in the acrosome. The enzyme catalyses N(6)-[(R)-dihydrolipoyl]-L-lysyl-[protein] + NAD(+) = N(6)-[(R)-lipoyl]-L-lysyl-[protein] + NADH + H(+). Functionally, lipoamide dehydrogenase is a component of the glycine cleavage system as well as an E3 component of three alpha-ketoacid dehydrogenase complexes (pyruvate-, alpha-ketoglutarate-, and branched-chain amino acid-dehydrogenase complex). The 2-oxoglutarate dehydrogenase complex is mainly active in the mitochondrion. A fraction of the 2-oxoglutarate dehydrogenase complex also localizes in the nucleus and is required for lysine succinylation of histones: associates with KAT2A on chromatin and provides succinyl-CoA to histone succinyltransferase KAT2A. In monomeric form may have additional moonlighting function as serine protease. Involved in the hyperactivation of spermatazoa during capacitation and in the spermatazoal acrosome reaction. This chain is Dihydrolipoyl dehydrogenase, mitochondrial (DLD), found in Canis lupus familiaris (Dog).